Here is a 265-residue protein sequence, read N- to C-terminus: Neuronal membrane glycoprotein M6-b (265 aa).

Residues 31 to 51 (GGVPYASLVATILCFSGVALF) form a helical membrane-spanning segment. An N-linked (GlcNAc...) asparagine glycan is attached at N73. The next 2 helical transmembrane spans lie at 90–110 (VIYGIASFFFLYGIILLAEGF) and 136–156 (FVFLTYVLGVAWLGVFGFSAV). N177 carries an N-linked (GlcNAc...) asparagine glycan. A helical transmembrane segment spans residues 224–244 (LFIVACAGAGATVIALLIYMM). Position 257 is a phosphoserine (S257).

This sequence belongs to the myelin proteolipid protein family. In terms of assembly, interacts with SERT. In terms of tissue distribution, neurons and glia; cerebellar Bergmann glia, in glia within white matter tracts of the cerebellum and cerebrum, and in embryonic dorsal root ganglia.

The protein resides in the cell membrane. May be involved in neural development. Involved in regulation of osteoblast function and bone formation. Involved in matrix vesicle release by osteoblasts; this function seems to involve maintenance of the actin cytoskeleton. May be involved in cellular trafficking of SERT and thereby in regulation of serotonin uptake. The chain is Neuronal membrane glycoprotein M6-b (GPM6B) from Homo sapiens (Human).